Here is a 225-residue protein sequence, read N- to C-terminus: Esterase OVCA2 (225 aa).

Catalysis depends on charge relay system residues Ser-119, Asp-177, and His-204.

This sequence belongs to the LovG family. Strongly expressed in kidney and liver. Moderately expressed in brain, skin and testis. Weakly expressed in heart, lung, small intestine, spleen, stomach and thymus.

The enzyme catalyses a carboxylic ester + H2O = an alcohol + a carboxylate + H(+). In terms of biological role, exhibits ester hydrolase activity with a strong preference for long-chain alkyl ester substrates and high selectivity against a variety of short, branched, and substituted esters. Is able to hydrolyze ester bonds within a wide range of p-nitrophenyl derivatives (C2-C14) in vitro, with a strong preference toward substrates of &gt;8 carbons. This Mus musculus (Mouse) protein is Esterase OVCA2 (Ovca2).